Here is a 501-residue protein sequence, read N- to C-terminus: Ribose import ATP-binding protein RbsA (501 aa).

ABC transporter domains lie at 5–241 (LQLK…VGRK) and 252–495 (APGD…VGKL). 37–44 (GENGAGKS) is an ATP binding site.

This sequence belongs to the ABC transporter superfamily. Ribose importer (TC 3.A.1.2.1) family. In terms of assembly, the complex is composed of an ATP-binding protein (RbsA), two transmembrane proteins (RbsC) and a solute-binding protein (RbsB).

It localises to the cell inner membrane. The catalysed reaction is D-ribose(out) + ATP + H2O = D-ribose(in) + ADP + phosphate + H(+). Functionally, part of the ABC transporter complex RbsABC involved in ribose import. Responsible for energy coupling to the transport system. This Escherichia coli O6:H1 (strain CFT073 / ATCC 700928 / UPEC) protein is Ribose import ATP-binding protein RbsA.